Reading from the N-terminus, the 434-residue chain is Adenylosuccinate synthetase (434 aa).

Residues 14–20 (GDEGKGK) and 42–44 (GHE) each bind GTP. Asp-15 acts as the Proton acceptor in catalysis. Positions 15 and 42 each coordinate Mg(2+). Residues 15–18 (DEGK), 40–43 (NSGH), Thr-133, Arg-147, Asn-229, Thr-244, and Arg-308 each bind IMP. Residue His-43 is the Proton donor of the active site. Substrate is bound at residue 304–310 (VTTGRVR). GTP-binding positions include Arg-310, 336-338 (KLD), and 422-424 (GTG).

The protein belongs to the adenylosuccinate synthetase family. Homodimer. The cofactor is Mg(2+).

The protein resides in the cytoplasm. It carries out the reaction IMP + L-aspartate + GTP = N(6)-(1,2-dicarboxyethyl)-AMP + GDP + phosphate + 2 H(+). The protein operates within purine metabolism; AMP biosynthesis via de novo pathway; AMP from IMP: step 1/2. Its function is as follows. Plays an important role in the salvage pathway for purine nucleotide biosynthesis. Catalyzes the first committed step in the biosynthesis of AMP from IMP. This chain is Adenylosuccinate synthetase, found in Theileria parva (East coast fever infection agent).